Reading from the N-terminus, the 555-residue chain is Glutamate--tRNA ligase (555 aa).

The 'HIGH' region signature appears at Pro100 to His110.

It belongs to the class-I aminoacyl-tRNA synthetase family. Glutamate--tRNA ligase type 2 subfamily.

The protein resides in the cytoplasm. It carries out the reaction tRNA(Glu) + L-glutamate + ATP = L-glutamyl-tRNA(Glu) + AMP + diphosphate. In terms of biological role, catalyzes the attachment of glutamate to tRNA(Glu) in a two-step reaction: glutamate is first activated by ATP to form Glu-AMP and then transferred to the acceptor end of tRNA(Glu). This Methanococcus maripaludis (strain C7 / ATCC BAA-1331) protein is Glutamate--tRNA ligase.